The chain runs to 488 residues: Cysteine--tRNA ligase (488 aa).

Cys-28 is a binding site for Zn(2+). The 'HIGH' region motif lies at 30-40; sequence PTVYDDAHLGH. Zn(2+) contacts are provided by Cys-209, His-239, and Glu-243. The short motif at 271–275 is the 'KMSKS' region element; sequence KMSKS. Lys-274 contacts ATP.

It belongs to the class-I aminoacyl-tRNA synthetase family. Monomer. It depends on Zn(2+) as a cofactor.

It localises to the cytoplasm. It catalyses the reaction tRNA(Cys) + L-cysteine + ATP = L-cysteinyl-tRNA(Cys) + AMP + diphosphate. This chain is Cysteine--tRNA ligase, found in Helicobacter hepaticus (strain ATCC 51449 / 3B1).